Consider the following 195-residue polypeptide: Cysteine/O-acetylserine efflux protein (195 aa).

At 1–9 (MTPMLLSAF) the chain is on the periplasmic side. A helical membrane pass occupies residues 10–32 (WTYTLITALTPGPNNILALSAAT). Residues 33–46 (AHGFRQSIRVLAGM) lie on the Cytoplasmic side of the membrane. The chain crosses the membrane as a helical span at residues 47 to 67 (SLGFLVVMLLCAGIAFSLAVI). The Periplasmic portion of the chain corresponds to 68 to 69 (DP). Residues 70-90 (AIIHLLSWVGAAYILWLAWKI) form a helical membrane-spanning segment. Over 91–104 (ATSPAADEKVRPKP) the chain is Cytoplasmic. A helical transmembrane segment spans residues 105–125 (VGFWVSFGLQFVNVKIILYGI). The Periplasmic segment spans residues 126 to 141 (TALSTFVLPQTQALNW). The chain crosses the membrane as a helical span at residues 142 to 162 (VIGVSILLALIGTFGNVCWAL). The Cytoplasmic portion of the chain corresponds to 163–176 (AGHLFQRAFRHYGR). A helical transmembrane segment spans residues 177-194 (QLNIILALLLVYCAVRIF). Y195 is a topological domain (periplasmic).

The protein belongs to the Rht family.

The protein localises to the cell inner membrane. The catalysed reaction is O-acetyl-L-serine(in) = O-acetyl-L-serine(out). It catalyses the reaction L-cysteine(in) = L-cysteine(out). Functionally, exporter of O-acetylserine (OAS) and cysteine. The chain is Cysteine/O-acetylserine efflux protein (eamB) from Salmonella paratyphi A (strain ATCC 9150 / SARB42).